A 498-amino-acid chain; its full sequence is Polyamine aminopropyltransferase (498 aa).

The next 6 membrane-spanning stretches (helical) occupy residues 7 to 27 (ISVL…GTIA), 35 to 55 (VTQF…GSWL), 67 to 87 (FLEI…ILYL), 97 to 117 (IPLF…IPVL), 134 to 154 (VLSL…IFFA), and 163 to 183 (GFIF…VLPL). The segment at 196 to 446 (VVVLTLLILG…AGQRPIQFKK (251 aa)) is spermidine synthase. The PABS domain occupies 200-439 (TLLILGFSYS…GEWGFVLAGQ (240 aa)). Gln-234 contributes to the S-methyl-5'-thioadenosine binding site. Positions 264 and 288 each coordinate spermidine. Residues Asp-308 and 342–343 (DA) each bind S-methyl-5'-thioadenosine. The Proton acceptor role is filled by Asp-360.

Belongs to the spermidine/spermine synthase family. As to quaternary structure, homodimer or homotetramer.

It is found in the cell membrane. It catalyses the reaction S-adenosyl 3-(methylsulfanyl)propylamine + putrescine = S-methyl-5'-thioadenosine + spermidine + H(+). Its pathway is amine and polyamine biosynthesis; spermidine biosynthesis; spermidine from putrescine: step 1/1. Catalyzes the irreversible transfer of a propylamine group from the amino donor S-adenosylmethioninamine (decarboxy-AdoMet) to putrescine (1,4-diaminobutane) to yield spermidine. In Leptospira interrogans serogroup Icterohaemorrhagiae serovar copenhageni (strain Fiocruz L1-130), this protein is Polyamine aminopropyltransferase.